We begin with the raw amino-acid sequence, 161 residues long: 3-isopropylmalate dehydratase small subunit 1 (161 aa).

Belongs to the LeuD family. LeuD type 2 subfamily. As to quaternary structure, heterodimer of LeuC and LeuD.

The catalysed reaction is (2R,3S)-3-isopropylmalate = (2S)-2-isopropylmalate. It functions in the pathway amino-acid biosynthesis; L-leucine biosynthesis; L-leucine from 3-methyl-2-oxobutanoate: step 2/4. Catalyzes the isomerization between 2-isopropylmalate and 3-isopropylmalate, via the formation of 2-isopropylmaleate. In Archaeoglobus fulgidus (strain ATCC 49558 / DSM 4304 / JCM 9628 / NBRC 100126 / VC-16), this protein is 3-isopropylmalate dehydratase small subunit 1 (leuD1).